We begin with the raw amino-acid sequence, 166 residues long: Phospholipase A2 inhibitor A4/A5 (166 aa).

Positions 1–19 are cleaved as a signal peptide; that stretch reads MRLILLSGLLLLGTFLVNG. Residues 46–161 form the C-type lectin domain; that stretch reads LFHAFLTVHK…CDDNLLVVCE (116 aa). Intrachain disulfides connect Cys83–Cys160 and Cys138–Cys152. An N-linked (GlcNAc...) asparagine glycan is attached at Asn122.

It belongs to the alpha-type phospholipase A2 inhibitor family. As to quaternary structure, homotrimer; non-covalently linked. As to expression, expressed by the liver.

The protein localises to the secreted. This phospholipase A2 inhibitor binds directly phospholipase A2 in the presence or absence of calcium. In Crotalus durissus terrificus (South American rattlesnake), this protein is Phospholipase A2 inhibitor A4/A5.